The sequence spans 375 residues: Alcohol dehydrogenase 6 (375 aa).

7 residues coordinate Zn(2+): cysteine 47, histidine 69, cysteine 99, cysteine 102, cysteine 105, cysteine 113, and cysteine 175. NAD(+)-binding positions include 200-205 (GLGGVG), aspartate 224, lysine 229, 293-295 (VGS), and arginine 370.

Belongs to the zinc-containing alcohol dehydrogenase family. Class-V subfamily. As to quaternary structure, dimer. Requires Zn(2+) as cofactor. In terms of tissue distribution, liver.

The protein localises to the cytoplasm. It carries out the reaction a primary alcohol + NAD(+) = an aldehyde + NADH + H(+). The catalysed reaction is a secondary alcohol + NAD(+) = a ketone + NADH + H(+). In terms of biological role, alcohol dehydrogenase. Catalyzes the NAD-dependent oxidation of primary alcohols to the corresponding aldehydes. Oxidizes secondary alcohols to the corresponding ketones. This chain is Alcohol dehydrogenase 6 (ADH6), found in Peromyscus maniculatus (North American deer mouse).